Here is a 476-residue protein sequence, read N- to C-terminus: ATP synthase subunit beta (476 aa).

152–159 lines the ATP pocket; it reads GGAGVGKT.

It belongs to the ATPase alpha/beta chains family. In terms of assembly, F-type ATPases have 2 components, CF(1) - the catalytic core - and CF(0) - the membrane proton channel. CF(1) has five subunits: alpha(3), beta(3), gamma(1), delta(1), epsilon(1). CF(0) has three main subunits: a(1), b(2) and c(9-12). The alpha and beta chains form an alternating ring which encloses part of the gamma chain. CF(1) is attached to CF(0) by a central stalk formed by the gamma and epsilon chains, while a peripheral stalk is formed by the delta and b chains.

The protein resides in the cell inner membrane. The enzyme catalyses ATP + H2O + 4 H(+)(in) = ADP + phosphate + 5 H(+)(out). Produces ATP from ADP in the presence of a proton gradient across the membrane. The catalytic sites are hosted primarily by the beta subunits. This Granulibacter bethesdensis (strain ATCC BAA-1260 / CGDNIH1) protein is ATP synthase subunit beta.